Reading from the N-terminus, the 173-residue chain is uncharacterized protein (173 aa).

This sequence belongs to the M.jannaschii MJ0150/MJ0739/MJ0745/MJ1460/MJ1642 family.

This is an uncharacterized protein from Methanocaldococcus jannaschii (strain ATCC 43067 / DSM 2661 / JAL-1 / JCM 10045 / NBRC 100440) (Methanococcus jannaschii).